The chain runs to 551 residues: Protein PLASTID TRANSCRIPTIONALLY ACTIVE 12, chloroplastic (551 aa).

The N-terminal 47 residues, 1 to 47, are a transit peptide targeting the chloroplast; the sequence is MASCSRTWLLPGMAPQATAQTVPRPLQSLKVFAGLPHRRRVLFSGVS. Disordered stretches follow at residues 76–161 and 463–529; these read SSYF…EGES and HSYN…DQLS. Low complexity predominate over residues 109–119; the sequence is RVRAARAPAPV. Composition is skewed to acidic residues over residues 467-476 and 485-498; these read EDSDDDEEDA and SLEDDEDDGDDAED. Residues 505–516 show a composition bias toward polar residues; sequence RNWSVLKTTGQA. Basic and acidic residues predominate over residues 518–529; it reads NPKEKSKKDQLS.

As to quaternary structure, component of the plastid-encoded plastid RNA polymerase (PEP) complex.

It localises to the plastid. Its subcellular location is the chloroplast. Required for the activity of the plastid-encoded RNA polymerase (PEP) and full expression of genes transcribed by PEP. Required for the proper build-up and formation of the PEP-complex. Binds single-stranded (ss) DNA and RNA, but not double-stranded (ds) DNA. In Oryza sativa subsp. japonica (Rice), this protein is Protein PLASTID TRANSCRIPTIONALLY ACTIVE 12, chloroplastic.